The chain runs to 329 residues: MNGVALDIAIHGAKIALIFFVVLTLAAYLVFAERRLLAWIQDRKGPNRVGPFGLLQPLADLIKLLTKEDFRPAGADKWLFYLAPAMAAVPAILTFAVIPFGAPVTILGREIPLQVADLNVGLLFFLALSSIAVYGVALGGWASNSKYALLGSIRGLAQLISYELSMGLSLVPTVMLAGSLRLSDIVAAQEGVWFIAYQPVAFLIFLISIAAECKRIPFDIPEAEGELVAGFHTEYSGMRFGLFFVGEYINIIVLGGLATTFFLGGWQGPLLPPFVWFSVKTLAFAFFFIWMRGTLPRLRYDQLMHLGWKVLTPLALLNILITGWVLMFV.

The next 8 membrane-spanning stretches (helical) occupy residues 12–32, 78–98, 120–140, 159–179, 191–211, 242–262, 270–290, and 309–329; these read GAKIALIFFVVLTLAAYLVFA, WLFYLAPAMAAVPAILTFAVI, VGLLFFLALSSIAVYGVALGG, LISYELSMGLSLVPTVMLAGS, GVWFIAYQPVAFLIFLISIAA, LFFVGEYINIIVLGGLATTFF, LLPPFVWFSVKTLAFAFFFIW, and KVLTPLALLNILITGWVLMFV.

The protein belongs to the complex I subunit 1 family. In terms of assembly, NDH-1 is composed of 14 different subunits. Subunits NuoA, H, J, K, L, M, N constitute the membrane sector of the complex.

It localises to the cell inner membrane. It carries out the reaction a quinone + NADH + 5 H(+)(in) = a quinol + NAD(+) + 4 H(+)(out). Its function is as follows. NDH-1 shuttles electrons from NADH, via FMN and iron-sulfur (Fe-S) centers, to quinones in the respiratory chain. The immediate electron acceptor for the enzyme in this species is believed to be ubiquinone. Couples the redox reaction to proton translocation (for every two electrons transferred, four hydrogen ions are translocated across the cytoplasmic membrane), and thus conserves the redox energy in a proton gradient. This subunit may bind ubiquinone. The sequence is that of NADH-quinone oxidoreductase subunit H 2 from Geobacter sulfurreducens (strain ATCC 51573 / DSM 12127 / PCA).